Here is a 159-residue protein sequence, read N- to C-terminus: MQKNMKTKKTKKRGRKEGNTPETERRMEPARSRTSAIPSGLRRRSGPSTPLRPGPEVRHAPTWRTASATTADSHRISPPYTPSSRGRHIHTRGARTRTRETSAAEINGVYARAVTRKTKRSETIDRLLLSVLPGHGPHASLRSHLRARSALRPPPDPPR.

Basic residues predominate over residues 1 to 15 (MQKNMKTKKTKKRGR). Disordered regions lie at residues 1 to 100 (MQKN…RTRE) and 133 to 159 (PGHG…DPPR). The segment covering 16–31 (KEGNTPETERRMEPAR) has biased composition (basic and acidic residues). The segment covering 85–96 (RGRHIHTRGART) has biased composition (basic residues).

The sequence is that of Protein B1 (B1) from Human herpesvirus 6B (strain Z29) (HHV-6 variant B).